We begin with the raw amino-acid sequence, 44 residues long: Defensin-like peptide (44 aa).

Intrachain disulfides connect C7–C32, C18–C40, and C22–C42.

In terms of tissue distribution, hemolymph.

The protein localises to the secreted. In terms of biological role, has antibacterial activity against the Gram-positive bacterium S.lutea (MIC=1.9 uM). Lacks antibacterial activity against the Gram-positive bacteria L.monocytogenes and M.luteus, and the Gram-negative bacteria E.coli D31, E.coli ATCC 25922, and S.typhimurium. Has antifungal activity against A.niger (MIC=2.9 uM), C.albicans (MIC=2.9 uM), C.fructus (MIC=2.9 uM), C.wickerhamii (MIC=2.9 uM), P.pastoris (MIC=2.9 uM), P.stiptis (MIC=2.9 uM), P.tannophilus (MIC=2.9 uM), T.harzianum (MIC=2.9 uM), and Z.marxianus (MIC=2.9 uM), but lacks antifungal activity against C.albidus, F.oxysporum, and S.cerevisiae. The polypeptide is Defensin-like peptide (Galleria mellonella (Greater wax moth)).